The sequence spans 235 residues: Aspartate/glutamate leucyltransferase (235 aa).

The protein belongs to the R-transferase family. Bpt subfamily.

The protein localises to the cytoplasm. It catalyses the reaction N-terminal L-glutamyl-[protein] + L-leucyl-tRNA(Leu) = N-terminal L-leucyl-L-glutamyl-[protein] + tRNA(Leu) + H(+). It carries out the reaction N-terminal L-aspartyl-[protein] + L-leucyl-tRNA(Leu) = N-terminal L-leucyl-L-aspartyl-[protein] + tRNA(Leu) + H(+). Functions in the N-end rule pathway of protein degradation where it conjugates Leu from its aminoacyl-tRNA to the N-termini of proteins containing an N-terminal aspartate or glutamate. The chain is Aspartate/glutamate leucyltransferase from Pseudomonas fluorescens (strain Pf0-1).